Here is a 301-residue protein sequence, read N- to C-terminus: Phosphate butyryltransferase (301 aa).

It belongs to the phosphate acetyltransferase and butyryltransferase family.

It carries out the reaction butanoyl-CoA + phosphate = butanoyl phosphate + CoA. It participates in lipid metabolism; butanoate metabolism. Catalyzes the conversion of butyryl-CoA through butyryl phosphate to butyrate. The polypeptide is Phosphate butyryltransferase (ptb) (Clostridium acetobutylicum (strain ATCC 824 / DSM 792 / JCM 1419 / IAM 19013 / LMG 5710 / NBRC 13948 / NRRL B-527 / VKM B-1787 / 2291 / W)).